Consider the following 394-residue polypeptide: HORMA domain-containing protein 1 (394 aa).

Residues 24–226 (HQSLVLVKRL…TPFHIFKVKV (203 aa)) form the HORMA domain. The segment at 252-394 (KILRDKDVED…RKFSEPKEHI (143 aa)) is disordered. The segment covering 253–282 (ILRDKDVEDEQEHYTSDDLDMETKMEEQEK) has biased composition (basic and acidic residues). Composition is skewed to polar residues over residues 310-324 (LSIS…VNKT) and 343-352 (KMANGNQPVK). Residues 362 to 374 (QHESGRRVLHHFD) show a composition bias toward basic and acidic residues. The residue at position 376 (Ser376) is a Phosphoserine. A Nuclear localization signal motif is present at residues 383–386 (KRRK).

As to quaternary structure, interacts with HORMAD2. Interacts with IHO1. Phosphorylated at Ser-377 in a SPO11-dependent manner.

The protein localises to the nucleus. Its subcellular location is the chromosome. In terms of biological role, plays a key role in meiotic progression. Regulates 3 different functions during meiosis: ensures that sufficient numbers of processed DNA double-strand breaks (DSBs) are available for successful homology search by increasing the steady-state numbers of single-stranded DSB ends. Promotes synaptonemal-complex formation independently of its role in homology search. Plays a key role in the male mid-pachytene checkpoint and the female meiotic prophase checkpoint: required for efficient build-up of ATR activity on unsynapsed chromosome regions, a process believed to form the basis of meiotic silencing of unsynapsed chromatin (MSUC) and meiotic prophase quality control in both sexes. In Macaca fascicularis (Crab-eating macaque), this protein is HORMA domain-containing protein 1 (HORMAD1).